We begin with the raw amino-acid sequence, 259 residues long: NAP1-related protein 1 (259 aa).

Residues 1–15 show a composition bias toward basic and acidic residues; that stretch reads MAAAEQKGKKPRTDG. Positions 1-20 are disordered; sequence MAAAEQKGKKPRTDGAEAEP. Positions 21–62 form a coiled coil; sequence VDAALLQSIEKLQEIQDEIEKVNEEACDKVLELEQKYNEVRR. A disordered region spans residues 228-259; it reads ELLDDDDEVSDDDDEEEDDEDQGEGEEDGEEN.

Belongs to the nucleosome assembly protein (NAP) family.

Its subcellular location is the nucleus. The protein localises to the cytoplasm. Acts as a histone H2A/H2B chaperone in nucleosome assembly. The chain is NAP1-related protein 1 from Oryza sativa subsp. indica (Rice).